Consider the following 396-residue polypeptide: Serine/threonine-protein kinase 32A (396 aa).

Residue glycine 2 is the site of N-myristoyl glycine attachment. Residues 23-281 (FEILRAIGKG…LSDVQNFPYM (259 aa)) form the Protein kinase domain. ATP-binding positions include 29 to 37 (IGKGSFGKV) and lysine 52. Aspartate 146 acts as the Proton acceptor in catalysis. Positions 373–396 (KRQPNLALEQTKDPQGEDGQNNNL) are disordered.

The protein belongs to the protein kinase superfamily. Ser/Thr protein kinase family. The cofactor is Mg(2+).

It localises to the cell membrane. The enzyme catalyses L-seryl-[protein] + ATP = O-phospho-L-seryl-[protein] + ADP + H(+). It catalyses the reaction L-threonyl-[protein] + ATP = O-phospho-L-threonyl-[protein] + ADP + H(+). This chain is Serine/threonine-protein kinase 32A (STK32A), found in Homo sapiens (Human).